The primary structure comprises 544 residues: Protein RDR1 (544 aa).

A DNA-binding region (zn(2)-C6 fungal-type) is located at residues 14 to 40 (CETCRELKRKCDGNQPCGACVRFEYDC). A disordered region spans residues 50 to 71 (KRRKTVEQDKEAPLPSPPVHVD).

It is found in the nucleus. Its function is as follows. May act as a transcriptional repressor of multidrug resistance genes. The chain is Protein RDR1 (RDR1) from Gibberella zeae (strain ATCC MYA-4620 / CBS 123657 / FGSC 9075 / NRRL 31084 / PH-1) (Wheat head blight fungus).